A 261-amino-acid chain; its full sequence is tRNA U34 carboxymethyltransferase (261 aa).

Carboxy-S-adenosyl-L-methionine-binding positions include lysine 25, tryptophan 39, lysine 44, glycine 63, 114–115 (VE), tyrosine 135, and arginine 250.

This sequence belongs to the class I-like SAM-binding methyltransferase superfamily. CmoB family. Homotetramer.

The enzyme catalyses carboxy-S-adenosyl-L-methionine + 5-hydroxyuridine(34) in tRNA = 5-carboxymethoxyuridine(34) in tRNA + S-adenosyl-L-homocysteine + H(+). Catalyzes carboxymethyl transfer from carboxy-S-adenosyl-L-methionine (Cx-SAM) to 5-hydroxyuridine (ho5U) to form 5-carboxymethoxyuridine (cmo5U) at position 34 in tRNAs. In Helicobacter pylori (strain P12), this protein is tRNA U34 carboxymethyltransferase.